A 435-amino-acid chain; its full sequence is MPTEQMPIFALATGAGRAAIAVMRLTGAGCGDMLQRLCGPLPPPRQASLRGLWRRDAAAAPVLLDRALVLWFPGPRSYTGEDSAELHLHAGPAVIAGVADALVALGARPAEPGEFTRRAFAHGRLDLIEAEGIADLIDAETEAQRRQALDQADGTLSRIYDGWAARLRTLLAHQEALIDFPDEDLPPGVEQALLDDLTALRSEMQAHLDDGGRGEKLRRGLVFTIVGAPNVGKSSLLNALAGRDAAIVSAIAGTTRDAIEIRVVLGDVPVTLIDTAGLRETQDEIEAEGVRRALFHVKHADCVIAMFDGETVPDDIPADAIRVRNKVDLAPVPAGADAIGISVRQGTGMDALRTALAERARALTASAAGPPLTRARHRAAIEETAGHLAAALDMHWPEMRGEEMRLAMRALGRLTGAVGVEDLLDTVFGQFCIGK.

(6S)-5-formyl-5,6,7,8-tetrahydrofolate contacts are provided by Arg-24, Glu-85, and Arg-124. The TrmE-type G domain occupies 220-361; that stretch reads GLVFTIVGAP…LRTALAERAR (142 aa). Asn-230 contacts K(+). GTP-binding positions include 230–235, 249–255, and 274–277; these read NVGKSS, SAIAGTT, and DTAG. Ser-234 serves as a coordination point for Mg(2+). The K(+) site is built by Ser-249, Ile-251, and Thr-254. Mg(2+) is bound at residue Thr-255. Position 435 (Lys-435) interacts with (6S)-5-formyl-5,6,7,8-tetrahydrofolate.

Belongs to the TRAFAC class TrmE-Era-EngA-EngB-Septin-like GTPase superfamily. TrmE GTPase family. As to quaternary structure, homodimer. Heterotetramer of two MnmE and two MnmG subunits. It depends on K(+) as a cofactor.

It localises to the cytoplasm. Exhibits a very high intrinsic GTPase hydrolysis rate. Involved in the addition of a carboxymethylaminomethyl (cmnm) group at the wobble position (U34) of certain tRNAs, forming tRNA-cmnm(5)s(2)U34. The polypeptide is tRNA modification GTPase MnmE (Gluconacetobacter diazotrophicus (strain ATCC 49037 / DSM 5601 / CCUG 37298 / CIP 103539 / LMG 7603 / PAl5)).